We begin with the raw amino-acid sequence, 315 residues long: Methionyl-tRNA formyltransferase (315 aa).

The interval 2–189 (SESLRIIFAG…LITTLKQLAD (188 aa)) is N-terminal domain. 113 to 116 (SLLP) is a (6S)-5,6,7,8-tetrahydrofolate binding site. The C-terminal domain stretch occupies residues 210–315 (KEEARIDWSL…EWFVPGNRLA (106 aa)).

The protein belongs to the Fmt family.

The enzyme catalyses L-methionyl-tRNA(fMet) + (6R)-10-formyltetrahydrofolate = N-formyl-L-methionyl-tRNA(fMet) + (6S)-5,6,7,8-tetrahydrofolate + H(+). Functionally, attaches a formyl group to the free amino group of methionyl-tRNA(fMet). The formyl group appears to play a dual role in the initiator identity of N-formylmethionyl-tRNA by promoting its recognition by IF2 and preventing the misappropriation of this tRNA by the elongation apparatus. The chain is Methionyl-tRNA formyltransferase from Escherichia coli O6:H1 (strain CFT073 / ATCC 700928 / UPEC).